We begin with the raw amino-acid sequence, 370 residues long: DNA replication and repair protein RecF (370 aa).

An ATP-binding site is contributed by 30–37 (GENAQGKT).

This sequence belongs to the RecF family.

It localises to the cytoplasm. The RecF protein is involved in DNA metabolism; it is required for DNA replication and normal SOS inducibility. RecF binds preferentially to single-stranded, linear DNA. It also seems to bind ATP. The chain is DNA replication and repair protein RecF from Bacillus velezensis (strain DSM 23117 / BGSC 10A6 / LMG 26770 / FZB42) (Bacillus amyloliquefaciens subsp. plantarum).